The primary structure comprises 443 residues: Probable protein S-acyltransferase 7 (443 aa).

2 helical membrane passes run 44 to 64 (SLAL…IFVA) and 76 to 96 (GVSI…LLLL). The 51-residue stretch at 149–199 (KYCDTCMLYRPPRCSHCSICNNCVERFDHHCPWVGQCIGMRNYRFFFMFVF) folds into the DHHC domain. Cys179 (S-palmitoyl cysteine intermediate) is an active-site residue. A run of 2 helical transmembrane segments spans residues 193–213 (FFFM…AFCW) and 237–257 (SIVL…LTVF). A phosphoserine mark is found at Ser327 and Ser377. A compositionally biased stretch (basic and acidic residues) spans 382–392 (ATVDEQSDRPS). The tract at residues 382–443 (ATVDEQSDRP…SGLVTENRPT (62 aa)) is disordered. Ser406 bears the Phosphoserine mark.

This sequence belongs to the DHHC palmitoyltransferase family.

It localises to the cell membrane. The catalysed reaction is L-cysteinyl-[protein] + hexadecanoyl-CoA = S-hexadecanoyl-L-cysteinyl-[protein] + CoA. In terms of biological role, palmitoyl acyltransferase. This is Probable protein S-acyltransferase 7 (PAT07) from Arabidopsis thaliana (Mouse-ear cress).